A 367-amino-acid chain; its full sequence is Pyrimidine monooxygenase RutA (367 aa).

Residues 50–51, Asn-116, Glu-125, 141–142, and Ser-191 contribute to the FMN site; these read IK and RY.

It belongs to the NtaA/SnaA/DszA monooxygenase family. RutA subfamily.

The enzyme catalyses uracil + FMNH2 + NADH + O2 = (Z)-3-ureidoacrylate + FMN + NAD(+) + H2O + H(+). The catalysed reaction is thymine + FMNH2 + NADH + O2 = (Z)-2-methylureidoacrylate + FMN + NAD(+) + H2O + H(+). Its function is as follows. Catalyzes the pyrimidine ring opening between N-3 and C-4 by an unusual flavin hydroperoxide-catalyzed mechanism, adding oxygen atoms in the process to yield ureidoacrylate peracid, that immediately reacts with FMN forming ureidoacrylate and FMN-N(5)-oxide. The FMN-N(5)-oxide reacts spontaneously with NADH to produce FMN. Requires the flavin reductase RutF to regenerate FMN in vivo. The chain is Pyrimidine monooxygenase RutA from Allorhizobium ampelinum (strain ATCC BAA-846 / DSM 112012 / S4) (Agrobacterium vitis (strain S4)).